Consider the following 220-residue polypeptide: Phosphatidylserine decarboxylase proenzyme (220 aa).

Serine 189 (schiff-base intermediate with substrate; via pyruvic acid) is an active-site residue. Serine 189 bears the Pyruvic acid (Ser); by autocatalysis mark.

Belongs to the phosphatidylserine decarboxylase family. PSD-A subfamily. Heterodimer of a large membrane-associated beta subunit and a small pyruvoyl-containing alpha subunit. It depends on pyruvate as a cofactor. Post-translationally, is synthesized initially as an inactive proenzyme. Formation of the active enzyme involves a self-maturation process in which the active site pyruvoyl group is generated from an internal serine residue via an autocatalytic post-translational modification. Two non-identical subunits are generated from the proenzyme in this reaction, and the pyruvate is formed at the N-terminus of the alpha chain, which is derived from the carboxyl end of the proenzyme. The post-translation cleavage follows an unusual pathway, termed non-hydrolytic serinolysis, in which the side chain hydroxyl group of the serine supplies its oxygen atom to form the C-terminus of the beta chain, while the remainder of the serine residue undergoes an oxidative deamination to produce ammonia and the pyruvoyl prosthetic group on the alpha chain.

Its subcellular location is the cell membrane. The enzyme catalyses a 1,2-diacyl-sn-glycero-3-phospho-L-serine + H(+) = a 1,2-diacyl-sn-glycero-3-phosphoethanolamine + CO2. It functions in the pathway phospholipid metabolism; phosphatidylethanolamine biosynthesis; phosphatidylethanolamine from CDP-diacylglycerol: step 2/2. In terms of biological role, catalyzes the formation of phosphatidylethanolamine (PtdEtn) from phosphatidylserine (PtdSer). The protein is Phosphatidylserine decarboxylase proenzyme of Pelobacter propionicus (strain DSM 2379 / NBRC 103807 / OttBd1).